The primary structure comprises 430 residues: MYYALVGYGVSNKALCEKLISMGHKIFVSELRKFTDEEKEWFSKKGIDFEEGKNSDRICEADRIVVSPSVRFDHPALAKCRGKTFSDIEVVLDMNKPNFVIAVTGSNGKTTSCKLLSFVFQKLGLDSYACGNIGTPAADVLGFKTKYLVLEISSFQLFWSKMLHIDIGVVLNIQPNHLDWHPSLEHYAKSKLKLLEFSKTGIYNCSDQNIMKFISEKSNLCAFDPLKIRKVDDGIVYEGKYYTFKNDFLKTHQNLQNLSAILKIFSVMNFDLKQVLEILEDFKPLKHRMEFVDEINGVVFLNDSKATSSAATISALENFNSRNVILLLAGRGKNEDYADLIAQIKRKAKHVIVFGEMVELLRDELKLSDIPYTISENMQNAVLKAFEISEKGDVVLLSPAGASFDMYRNYQERGEHFINMVKLLRGKLLE.

105 to 111 (GSNGKTT) lines the ATP pocket.

It belongs to the MurCDEF family.

The protein localises to the cytoplasm. It catalyses the reaction UDP-N-acetyl-alpha-D-muramoyl-L-alanine + D-glutamate + ATP = UDP-N-acetyl-alpha-D-muramoyl-L-alanyl-D-glutamate + ADP + phosphate + H(+). Its pathway is cell wall biogenesis; peptidoglycan biosynthesis. In terms of biological role, cell wall formation. Catalyzes the addition of glutamate to the nucleotide precursor UDP-N-acetylmuramoyl-L-alanine (UMA). The chain is UDP-N-acetylmuramoylalanine--D-glutamate ligase from Pseudothermotoga lettingae (strain ATCC BAA-301 / DSM 14385 / NBRC 107922 / TMO) (Thermotoga lettingae).